We begin with the raw amino-acid sequence, 294 residues long: Acetyl-coenzyme A carboxylase carboxyl transferase subunit beta (294 aa).

Residues 30–294 (IMTKCPECKK…PETGGESDGE (265 aa)) enclose the CoA carboxyltransferase N-terminal domain. Zn(2+)-binding residues include Cys34, Cys37, Cys53, and Cys56. The segment at 34-56 (CPECKKIMYTKELQKNLMVCNYC) adopts a C4-type zinc-finger fold.

The protein belongs to the AccD/PCCB family. In terms of assembly, acetyl-CoA carboxylase is a heterohexamer composed of biotin carboxyl carrier protein (AccB), biotin carboxylase (AccC) and two subunits each of ACCase subunit alpha (AccA) and ACCase subunit beta (AccD). It depends on Zn(2+) as a cofactor.

It is found in the cytoplasm. It carries out the reaction N(6)-carboxybiotinyl-L-lysyl-[protein] + acetyl-CoA = N(6)-biotinyl-L-lysyl-[protein] + malonyl-CoA. It participates in lipid metabolism; malonyl-CoA biosynthesis; malonyl-CoA from acetyl-CoA: step 1/1. Component of the acetyl coenzyme A carboxylase (ACC) complex. Biotin carboxylase (BC) catalyzes the carboxylation of biotin on its carrier protein (BCCP) and then the CO(2) group is transferred by the transcarboxylase to acetyl-CoA to form malonyl-CoA. The sequence is that of Acetyl-coenzyme A carboxylase carboxyl transferase subunit beta from Listeria welshimeri serovar 6b (strain ATCC 35897 / DSM 20650 / CCUG 15529 / CIP 8149 / NCTC 11857 / SLCC 5334 / V8).